The sequence spans 363 residues: Aminomethyltransferase (363 aa).

Belongs to the GcvT family. As to quaternary structure, the glycine cleavage system is composed of four proteins: P, T, L and H.

The enzyme catalyses N(6)-[(R)-S(8)-aminomethyldihydrolipoyl]-L-lysyl-[protein] + (6S)-5,6,7,8-tetrahydrofolate = N(6)-[(R)-dihydrolipoyl]-L-lysyl-[protein] + (6R)-5,10-methylene-5,6,7,8-tetrahydrofolate + NH4(+). In terms of biological role, the glycine cleavage system catalyzes the degradation of glycine. In Prosthecochloris aestuarii (strain DSM 271 / SK 413), this protein is Aminomethyltransferase.